The chain runs to 720 residues: Protein O-mannosyl-transferase 1 (720 aa).

8 helical membrane-spanning segments follow: residues 7–27 (PVSVTVEINVLLLAVTALALF), 67–87 (FGHMILALGAYLGGFDGNFVW), 105–125 (LIPALAGSFCVPLAYLVVVEL), 127–147 (YSHFSALGACALLLMENSLIV), 150–170 (RFMLLESVLIFFLLLAVLSYL), 178–198 (SFFKWFWLVICGVSCAFGIGV), 201–221 (MGMFTYFLLLSLAAVHTWQLI), and 239–259 (FLALVVLPVIMYLGFFYIHLT). MIR domains follow at residues 291–354 (PLDV…IKDP), 365–422 (PKPV…VDIV), and 426–486 (SEKE…VEEH). Transmembrane regions (helical) follow at residues 570–590 (IVTWTTGNITLVVYCLLFLTY), 609–629 (LVLAGVVCLGGWAVNYLPFFL), 633–653 (TLFLYHYLPALTFKILQIPIV), and 670–690 (AFGGVILAVLCSVYMSYHSLS).

It belongs to the glycosyltransferase 39 family. Widely expressed. Has particularly strong expression in testis, ovary, brain, liver and heart.

It localises to the endoplasmic reticulum membrane. It carries out the reaction a di-trans,poly-cis-dolichyl beta-D-mannosyl phosphate + L-seryl-[protein] = 3-O-(alpha-D-mannosyl)-L-seryl-[protein] + a di-trans,poly-cis-dolichyl phosphate + H(+). The catalysed reaction is a di-trans,poly-cis-dolichyl beta-D-mannosyl phosphate + L-threonyl-[protein] = 3-O-(alpha-D-mannosyl)-L-threonyl-[protein] + a di-trans,poly-cis-dolichyl phosphate + H(+). Its pathway is protein modification; protein glycosylation. In terms of biological role, transfers mannosyl residues to the hydroxyl group of serine or threonine residues. Coexpression of both POMT1 and POMT2 is necessary for enzyme activity, expression of either POMT1 or POMT2 alone is insufficient. This chain is Protein O-mannosyl-transferase 1, found in Danio rerio (Zebrafish).